Here is a 320-residue protein sequence, read N- to C-terminus: Beta-carotene 3-hydroxylase, chloroplastic (320 aa).

A chloroplast-targeting transit peptide spans 1-78 (METQFLVSGR…EKELRGKLVV (78 aa)). A run of 2 helical transmembrane segments spans residues 118–138 (YLVA…LSVY) and 152–172 (LSEM…MEFW). One can recognise a Fatty acid hydroxylase domain in the interval 165–292 (AAVGMEFWAR…KFNGVPYGLF (128 aa)). Residues 177–182 (HEALWH) carry the Histidine box-1 motif. Residues 189 to 193 (HESHH) carry the Histidine box-2 motif. Helical transmembrane passes span 204–224 (DIFA…GFFH) and 228–248 (IPGL…AYMF). The short motif at 250–255 (HDGLVH) is the Histidine box-3 element. Residues 276–280 (HTLHH) carry the Histidine box-4 motif.

Belongs to the sterol desaturase family.

Its subcellular location is the plastid. It localises to the chloroplast membrane. It catalyses the reaction all-trans-beta-carotene + 4 reduced [2Fe-2S]-[ferredoxin] + 2 O2 + 4 H(+) = all-trans-zeaxanthin + 4 oxidized [2Fe-2S]-[ferredoxin] + 2 H2O. Its function is as follows. Nonheme diiron monooxygenase involved in the biosynthesis of xanthophylls. Specific for beta-ring hydroxylations of beta-carotene. Uses ferredoxin as an electron donor. This chain is Beta-carotene 3-hydroxylase, chloroplastic (BHY), found in Gentiana lutea (Yellow gentian).